A 150-amino-acid chain; its full sequence is S-protein homolog 28 (150 aa).

A glycan (N-linked (GlcNAc...) asparagine) is linked at Asn-122.

Belongs to the plant self-incompatibility (S1) protein family.

It localises to the secreted. The polypeptide is S-protein homolog 28 (Arabidopsis thaliana (Mouse-ear cress)).